A 201-amino-acid chain; its full sequence is Retinol-binding protein 4 (201 aa).

The signal sequence occupies residues methionine 1 to glycine 18. 3 cysteine pairs are disulfide-bonded: cysteine 22–cysteine 178, cysteine 88–cysteine 192, and cysteine 138–cysteine 147. Substrate is bound at residue glutamine 116. Arginine 139 is subject to Omega-N-methylarginine.

It belongs to the calycin superfamily. Lipocalin family. In terms of assembly, interacts with TTR. Interaction with TTR prevents its loss by filtration through the kidney glomeruli. Interacts with STRA6.

It localises to the secreted. In terms of biological role, retinol-binding protein that mediates retinol transport in blood plasma. Delivers retinol from the liver stores to the peripheral tissues. Transfers the bound all-trans retinol to STRA6, that then facilitates retinol transport across the cell membrane. In Oryctolagus cuniculus (Rabbit), this protein is Retinol-binding protein 4 (RBP4).